Consider the following 263-residue polypeptide: 3-methyl-2-oxobutanoate hydroxymethyltransferase (263 aa).

Mg(2+) contacts are provided by Asp45 and Asp84. 3-methyl-2-oxobutanoate is bound by residues 45-46 (DS), Asp84, and Lys112. Glu114 contacts Mg(2+). The active-site Proton acceptor is the Glu180.

This sequence belongs to the PanB family. As to quaternary structure, homodecamer; pentamer of dimers. It depends on Mg(2+) as a cofactor.

The protein localises to the cytoplasm. The catalysed reaction is 3-methyl-2-oxobutanoate + (6R)-5,10-methylene-5,6,7,8-tetrahydrofolate + H2O = 2-dehydropantoate + (6S)-5,6,7,8-tetrahydrofolate. The protein operates within cofactor biosynthesis; (R)-pantothenate biosynthesis; (R)-pantoate from 3-methyl-2-oxobutanoate: step 1/2. Functionally, catalyzes the reversible reaction in which hydroxymethyl group from 5,10-methylenetetrahydrofolate is transferred onto alpha-ketoisovalerate to form ketopantoate. This chain is 3-methyl-2-oxobutanoate hydroxymethyltransferase, found in Salmonella enteritidis PT4 (strain P125109).